The primary structure comprises 147 residues: Lysozyme C-1 (147 aa).

The signal sequence occupies residues 1–18; the sequence is MKALIILGFLFLSVAVQG. The region spanning 19–147 is the C-type lysozyme domain; sequence KVFERCELAR…VSSYVEGCTL (129 aa). Disulfide bonds link Cys-24/Cys-145, Cys-48/Cys-133, Cys-83/Cys-99, and Cys-95/Cys-113. Residues Glu-53 and Asp-71 contribute to the active site.

The protein belongs to the glycosyl hydrolase 22 family. In terms of assembly, monomer. Stomach-specific.

The enzyme catalyses Hydrolysis of (1-&gt;4)-beta-linkages between N-acetylmuramic acid and N-acetyl-D-glucosamine residues in a peptidoglycan and between N-acetyl-D-glucosamine residues in chitodextrins.. Its function is as follows. Lysozymes have primarily a bacteriolytic function; those in tissues and body fluids are associated with the monocyte-macrophage system and enhance the activity of immunoagents. The chain is Lysozyme C-1 (LYZ1) from Bos taurus (Bovine).